The following is a 246-amino-acid chain: E3 ubiquitin-protein ligase MARCHF2 (246 aa).

The RING-CH-type zinc finger occupies 56-116 (GTQSDGPICR…ELCHTEFAVE (61 aa)). Zn(2+) is bound by residues Cys64, Cys67, Cys80, Cys82, His90, Cys93, Cys106, and Cys109. The next 2 membrane-spanning stretches (helical) occupy residues 138–158 (LFCDMVCFLFITPLAAISGWL) and 175–195 (AVGLIALTIALFTIYVLWTLV).

It is found in the endoplasmic reticulum membrane. The protein localises to the lysosome membrane. The protein resides in the endosome membrane. It catalyses the reaction S-ubiquitinyl-[E2 ubiquitin-conjugating enzyme]-L-cysteine + [acceptor protein]-L-lysine = [E2 ubiquitin-conjugating enzyme]-L-cysteine + N(6)-ubiquitinyl-[acceptor protein]-L-lysine.. It participates in protein modification; protein ubiquitination. Its function is as follows. E3 ubiquitin-protein ligase which may be involved in endosomal trafficking. E3 ubiquitin ligases accept ubiquitin from an E2 ubiquitin-conjugating enzyme in the form of a thioester and then directly transfer the ubiquitin to targeted substrates. In Xenopus tropicalis (Western clawed frog), this protein is E3 ubiquitin-protein ligase MARCHF2 (marchf2).